Reading from the N-terminus, the 204-residue chain is Ubiquitin-conjugating enzyme E2 S (204 aa).

Residues 14–160 form the UBC core domain; that stretch reads QIIKQVAREI…AKMFTEIHAK (147 aa). The active-site Glycyl thioester intermediate is the cysteine 98. A compositionally biased stretch (polar residues) spans 165–176; sequence SSNNISEGQQES. The segment at 165–204 is disordered; that stretch reads SSNNISEGQQESLPGKKRVAVNEKMCDKKKKDKKRALKRL. Residues 191–204 show a composition bias toward basic residues; the sequence is DKKKKDKKRALKRL.

It belongs to the ubiquitin-conjugating enzyme family.

It catalyses the reaction S-ubiquitinyl-[E1 ubiquitin-activating enzyme]-L-cysteine + [E2 ubiquitin-conjugating enzyme]-L-cysteine = [E1 ubiquitin-activating enzyme]-L-cysteine + S-ubiquitinyl-[E2 ubiquitin-conjugating enzyme]-L-cysteine.. It functions in the pathway protein modification; protein ubiquitination. Catalyzes the covalent attachment of ubiquitin to other proteins. Acts as an essential factor of the anaphase promoting complex/cyclosome (APC/C), a cell cycle-regulated ubiquitin ligase that controls progression through mitosis. Acts by specifically elongating polyubiquitin chains initiated by the E2 enzyme UBCH10 on APC/C substrates, enhancing the degradation of APC/C substrates by the proteasome and promoting mitotic exit. The sequence is that of Ubiquitin-conjugating enzyme E2 S from Nematostella vectensis (Starlet sea anemone).